The sequence spans 102 residues: Large ribosomal subunit protein uL24 (102 aa).

The protein belongs to the universal ribosomal protein uL24 family. In terms of assembly, part of the 50S ribosomal subunit.

In terms of biological role, one of two assembly initiator proteins, it binds directly to the 5'-end of the 23S rRNA, where it nucleates assembly of the 50S subunit. Its function is as follows. One of the proteins that surrounds the polypeptide exit tunnel on the outside of the subunit. This is Large ribosomal subunit protein uL24 from Rhizobium johnstonii (strain DSM 114642 / LMG 32736 / 3841) (Rhizobium leguminosarum bv. viciae).